The sequence spans 764 residues: 5-methyltetrahydropteroyltriglutamate--homocysteine methyltransferase (764 aa).

Residues 16-19 (RELK) and Lys-112 each bind 5-methyltetrahydropteroyltri-L-glutamate. Residues 431-433 (IGS) and Glu-484 contribute to the L-homocysteine site. Residues 431-433 (IGS) and Glu-484 each bind L-methionine. Residues 515 to 516 (RC) and Trp-561 each bind 5-methyltetrahydropteroyltri-L-glutamate. Asp-599 is a binding site for L-homocysteine. Residue Asp-599 coordinates L-methionine. Residue Glu-605 participates in 5-methyltetrahydropteroyltri-L-glutamate binding. Residues His-641, Cys-643, and Glu-665 each contribute to the Zn(2+) site. His-694 (proton donor) is an active-site residue. Zn(2+) is bound at residue Cys-726.

This sequence belongs to the vitamin-B12 independent methionine synthase family. Zn(2+) is required as a cofactor.

The catalysed reaction is 5-methyltetrahydropteroyltri-L-glutamate + L-homocysteine = tetrahydropteroyltri-L-glutamate + L-methionine. It functions in the pathway amino-acid biosynthesis; L-methionine biosynthesis via de novo pathway; L-methionine from L-homocysteine (MetE route): step 1/1. Catalyzes the transfer of a methyl group from 5-methyltetrahydrofolate to homocysteine resulting in methionine formation. The sequence is that of 5-methyltetrahydropteroyltriglutamate--homocysteine methyltransferase from Paraburkholderia phytofirmans (strain DSM 17436 / LMG 22146 / PsJN) (Burkholderia phytofirmans).